A 119-amino-acid polypeptide reads, in one-letter code: MSQVDKAARRQKIKDRSRVSVQGTASKPRLCIYRSLAEMYAQLIDDVNGKTLVTASTMTKNNKAFEGTKSDASRIVGQQIAEKALAAGITNVVFDRNGFRYHGRVKALADGAREAGLIF.

Residues 1–23 (MSQVDKAARRQKIKDRSRVSVQG) form a disordered region.

This sequence belongs to the universal ribosomal protein uL18 family. Part of the 50S ribosomal subunit; part of the 5S rRNA/L5/L18/L25 subcomplex. Contacts the 5S and 23S rRNAs.

This is one of the proteins that bind and probably mediate the attachment of the 5S RNA into the large ribosomal subunit, where it forms part of the central protuberance. The protein is Large ribosomal subunit protein uL18 of Chlorobium chlorochromatii (strain CaD3).